The primary structure comprises 261 residues: MLCANNVSAQIGQKKLLKHINFYVKPNELVVIIGPNGAGKSSLLKALCGDIKINNGDITLNDRLLSDYSIASLATLRAVLTQNYELDFPFSVAEVVDMAHFAHQADYSKQQLMHFSEQVMQALSVTHLKTHTFTQLSGGEKQRVQLARVLCQIQPSLVANKTPYLLIDEPTSSLDIFHQYDVMAQAKSIASQGAGVVAVIHDLSLAASFADRIYMLNNGEVAACGIPKEVLTPALLKRVYNINARLENNTSEAMPHIQMCY.

Residues 2 to 243 form the ABC transporter domain; sequence LCANNVSAQI…ALLKRVYNIN (242 aa). 34 to 41 is a binding site for ATP; it reads GPNGAGKS.

It belongs to the ABC transporter superfamily. Heme (hemin) importer (TC 3.A.1.14.5) family. In terms of assembly, the complex is composed of two ATP-binding proteins (HmuV), two transmembrane proteins (HmuU) and a solute-binding protein (HmuT).

Its subcellular location is the cell inner membrane. Functionally, part of the ABC transporter complex HmuTUV involved in hemin import. Responsible for energy coupling to the transport system. This Pseudoalteromonas translucida (strain TAC 125) protein is Hemin import ATP-binding protein HmuV.